Consider the following 355-residue polypeptide: MIGEKKKRIGLIFGGYSNEHEVSISSAKTVFQAFNSEINKKRFKVKSFYIDKYGDWLDNDLSEKILNDEIKSNNIKKQEIVNQQKINFLDGIEFQNIDVWFPLLHGLNGEDGSIHGLLQYTRKPIVGCGILGSAIGMDKIMMKTIFSNLKIPQVNYLAFQNEDLDDREVKKKVINEILKKLNFPFFVKPSNSGSSLGISKVINESEILQSLEKAQKIDSRILVEEGLEVREIECGIIGNSELLTSEIGEIKYESDWYDYDSKYYSNNKIIIPAEIDSKITKEIKKIAIQSCRALNIFGFARVDFFLEKSSNKILLNEINTIPGFTTNSMFPMLWKASGLNIEQLVAKLVDISLDL.

In terms of domain architecture, ATP-grasp spans 143-350 (KTIFSNLKIP…IEQLVAKLVD (208 aa)). ATP is bound at residue 178 to 233 (LKKLNFPFFVKPSNSGSSLGISKVINESEILQSLEKAQKIDSRILVEEGLEVREIE). Residues aspartate 303, glutamate 317, and asparagine 319 each coordinate Mg(2+).

It belongs to the D-alanine--D-alanine ligase family. Mg(2+) is required as a cofactor. It depends on Mn(2+) as a cofactor.

The protein localises to the cytoplasm. The catalysed reaction is 2 D-alanine + ATP = D-alanyl-D-alanine + ADP + phosphate + H(+). It participates in cell wall biogenesis; peptidoglycan biosynthesis. Functionally, cell wall formation. This is D-alanine--D-alanine ligase from Prochlorococcus marinus (strain MIT 9215).